A 474-amino-acid polypeptide reads, in one-letter code: Trigger factor (474 aa).

The PPIase FKBP-type domain occupies 171 to 258; the sequence is GDVAVIDFQG…LKELKTRDLP (88 aa). Positions 441-474 are disordered; that stretch reads TEVDAASATVETTATETAEEAPEAPKAKKGKKKA. Residues 444–456 are compositionally biased toward low complexity; it reads DAASATVETTATE.

The protein belongs to the FKBP-type PPIase family. Tig subfamily.

Its subcellular location is the cytoplasm. The catalysed reaction is [protein]-peptidylproline (omega=180) = [protein]-peptidylproline (omega=0). In terms of biological role, involved in protein export. Acts as a chaperone by maintaining the newly synthesized protein in an open conformation. Functions as a peptidyl-prolyl cis-trans isomerase. This is Trigger factor from Synechococcus elongatus (strain ATCC 33912 / PCC 7942 / FACHB-805) (Anacystis nidulans R2).